The chain runs to 444 residues: MPSIGLLSLGCPKNLVDSEVMLGLLRENNFTITNNEANADALIVNTCGFIESAKEESIRHIFELAQYKERGKCKALIVTGCLAQRYSKELLEEIPEIDVILGPGHVSNIVEVVNHALEGKDRHTRVEDLLYIYDEHSPRLLSTPSYTAYVKIAEGCDNRCAYCAIPDIRGKFRSRPIESIEAEVKDLVEKGVREIILIAQDTTRYGLDLYGEYRLDQLLERLGPIQGLQWIRLLYCYPNRFTDQLIKAMAENPNICKYIDLPMQHAANDILRAMKRPVTKQQARILIQKLRTEIPGIVIRTSFIVGFPGETEEHFKELLDFMEEVKFDRAGVFTYSQEEGTPAAEMPNQIHGRIKQERYHRAMKLQREISLSQNQKRIGQEIEVVVEEVTDQSKGVYTGRSSYDAPEIDGTVEFTSSRPLRIGDFVKVKINRALEYDLMGELAQ.

Positions 2–118 constitute an MTTase N-terminal domain; that stretch reads PSIGLLSLGC…IVEVVNHALE (117 aa). The [4Fe-4S] cluster site is built by C11, C47, C81, C156, C160, and C163. One can recognise a Radical SAM core domain in the interval 142–372; the sequence is STPSYTAYVK…MKLQREISLS (231 aa). The region spanning 375–444 is the TRAM domain; sequence QKRIGQEIEV…EYDLMGELAQ (70 aa).

It belongs to the methylthiotransferase family. RimO subfamily. [4Fe-4S] cluster serves as cofactor.

Its subcellular location is the cytoplasm. The catalysed reaction is L-aspartate(89)-[ribosomal protein uS12]-hydrogen + (sulfur carrier)-SH + AH2 + 2 S-adenosyl-L-methionine = 3-methylsulfanyl-L-aspartate(89)-[ribosomal protein uS12]-hydrogen + (sulfur carrier)-H + 5'-deoxyadenosine + L-methionine + A + S-adenosyl-L-homocysteine + 2 H(+). Catalyzes the methylthiolation of an aspartic acid residue of ribosomal protein uS12. The polypeptide is Ribosomal protein uS12 methylthiotransferase RimO (Desulforamulus reducens (strain ATCC BAA-1160 / DSM 100696 / MI-1) (Desulfotomaculum reducens)).